The sequence spans 100 residues: Urease subunit gamma (100 aa).

The protein belongs to the urease gamma subunit family. Heterotrimer of UreA (gamma), UreB (beta) and UreC (alpha) subunits. Three heterotrimers associate to form the active enzyme.

Its subcellular location is the cytoplasm. The catalysed reaction is urea + 2 H2O + H(+) = hydrogencarbonate + 2 NH4(+). The protein operates within nitrogen metabolism; urea degradation; CO(2) and NH(3) from urea (urease route): step 1/1. The protein is Urease subunit gamma of Pseudomonas fluorescens (strain Pf0-1).